The sequence spans 354 residues: UDP-N-acetylglucosamine--N-acetylmuramyl-(pentapeptide) pyrophosphoryl-undecaprenol N-acetylglucosamine transferase (354 aa).

Residues 11 to 13 (TAG), arginine 164, serine 194, and glutamine 289 each bind UDP-N-acetyl-alpha-D-glucosamine.

Belongs to the glycosyltransferase 28 family. MurG subfamily.

Its subcellular location is the cell membrane. The catalysed reaction is di-trans,octa-cis-undecaprenyl diphospho-N-acetyl-alpha-D-muramoyl-L-alanyl-D-glutamyl-meso-2,6-diaminopimeloyl-D-alanyl-D-alanine + UDP-N-acetyl-alpha-D-glucosamine = di-trans,octa-cis-undecaprenyl diphospho-[N-acetyl-alpha-D-glucosaminyl-(1-&gt;4)]-N-acetyl-alpha-D-muramoyl-L-alanyl-D-glutamyl-meso-2,6-diaminopimeloyl-D-alanyl-D-alanine + UDP + H(+). Its pathway is cell wall biogenesis; peptidoglycan biosynthesis. Its function is as follows. Cell wall formation. Catalyzes the transfer of a GlcNAc subunit on undecaprenyl-pyrophosphoryl-MurNAc-pentapeptide (lipid intermediate I) to form undecaprenyl-pyrophosphoryl-MurNAc-(pentapeptide)GlcNAc (lipid intermediate II). The polypeptide is UDP-N-acetylglucosamine--N-acetylmuramyl-(pentapeptide) pyrophosphoryl-undecaprenol N-acetylglucosamine transferase (Clostridium botulinum (strain Kyoto / Type A2)).